Reading from the N-terminus, the 313-residue chain is ADP-L-glycero-D-manno-heptose-6-epimerase (313 aa).

NADP(+) contacts are provided by residues 10–11 (MI), 31–32 (DN), lysine 38, arginine 53, 75–79 (EGACS), and asparagine 92. Tyrosine 139 functions as the Proton acceptor in the catalytic mechanism. Residue lysine 143 participates in NADP(+) binding. Asparagine 174 is a substrate binding site. Residues valine 175 and lysine 183 each contribute to the NADP(+) site. Catalysis depends on lysine 183, which acts as the Proton acceptor. Substrate-binding positions include serine 185, histidine 192, 206-209 (FEGS), arginine 214, and tyrosine 277.

The protein belongs to the NAD(P)-dependent epimerase/dehydratase family. HldD subfamily. In terms of assembly, homopentamer. It depends on NADP(+) as a cofactor.

It carries out the reaction ADP-D-glycero-beta-D-manno-heptose = ADP-L-glycero-beta-D-manno-heptose. It functions in the pathway nucleotide-sugar biosynthesis; ADP-L-glycero-beta-D-manno-heptose biosynthesis; ADP-L-glycero-beta-D-manno-heptose from D-glycero-beta-D-manno-heptose 7-phosphate: step 4/4. The protein operates within bacterial outer membrane biogenesis; LPS core biosynthesis. Catalyzes the interconversion between ADP-D-glycero-beta-D-manno-heptose and ADP-L-glycero-beta-D-manno-heptose via an epimerization at carbon 6 of the heptose. In Vibrio parahaemolyticus serotype O3:K6 (strain RIMD 2210633), this protein is ADP-L-glycero-D-manno-heptose-6-epimerase.